Here is a 1085-residue protein sequence, read N- to C-terminus: KN motif and ankyrin repeat domain-containing protein 2 (1085 aa).

The span at 136–145 (KLEEEKDGRR) shows a compositional bias: basic and acidic residues. Residues 136 to 192 (KLEEEKDGRRFSNLGSMHSSMAGSNTSLSSAHSFNRAQGGGSYTPMSSGLSTPVSPT) form a disordered region. 2 stretches are compositionally biased toward polar residues: residues 148–171 (NLGS…SFNR) and 179–189 (TPMSSGLSTPV). A coiled-coil region spans residues 196-216 (LQHVREQMAVALRKIRELEEQ). The disordered stretch occupies residues 273–295 (NGAGAANKATGSLSPTTPGSLQD). Over residues 281 to 295 (ATGSLSPTTPGSLQD) the composition is skewed to polar residues. The stretch at 356–383 (VGLLEVQLRKTMQELQSAQQQVEAAQKE) forms a coiled coil. 3 disordered regions span residues 557–736 (RKAD…SNVQ), 752–791 (TTTQ…SAKQ), and 798–817 (TTKP…TDSL). Residues 589–600 (SSSESSEDESDA) show a composition bias toward acidic residues. Over residues 601-611 (SEYHEATEKLP) the composition is skewed to basic and acidic residues. Residues 614 to 648 (ATPQSLVSSCIPQLASETPATQTAQHSTAQIPTNH) show a composition bias toward polar residues. Residues 649–668 (TPAAQTTSQSHTTDATTQQH) show a composition bias toward low complexity. Polar residues-rich tracts occupy residues 706 to 736 (NPPS…SNVQ) and 760 to 788 (SAKP…TDGS). Low complexity predominate over residues 798–810 (TTKPAADTATPPT). ANK repeat units follow at residues 895 to 925 (NGNT…NADK), 929 to 962 (AGYT…DVNA), 967 to 996 (AGQT…QVNL), 1000 to 1030 (DGST…DATL), and 1034 to 1063 (DGST…FAKP). The interval 1064 to 1085 (PSPVSPKSPILGSSPPSSSELK) is disordered. Over residues 1070–1085 (KSPILGSSPPSSSELK) the composition is skewed to low complexity.

It localises to the cytoplasm. The protein resides in the mitochondrion. Functionally, may be involved in different biological processes including transcription and apoptosis by sequestering specific proteins outside of the nucleus. Involved in actin stress fibers formation probably through its interaction with ARHGDIA and the regulation of the Rho signaling pathway. May thereby play a role in cell adhesion and migration, regulating for instance podocytes migration during development of the kidney. The chain is KN motif and ankyrin repeat domain-containing protein 2 (kank2) from Danio rerio (Zebrafish).